Consider the following 275-residue polypeptide: Transcriptional coregulator psa-3 (275 aa).

Positions 91–161 (TDDIKRLFQS…RRTVCHEALV (71 aa)) constitute an MEIS N-terminal domain. Residues 239–275 (QLPPNFLKPSNEKSPEKSEEEKSQKPSSSPKSPSLSD) form a disordered region. Basic and acidic residues predominate over residues 248–262 (SNEKSPEKSEEEKSQ). Residues 263–275 (KPSSSPKSPSLSD) are compositionally biased toward low complexity.

Interacts with homeobox protein ceh-20; the interaction is direct, facilitates nuclear localization of ceh-20 and may stabilize interaction of a ceh-20-nob-1 complex with DNA.

The protein resides in the nucleus. Functionally, probable transcription coregulator. Required for asymmetric cell divisions of the T hypodermal cells, and cell fate determination, in concert with homeobox proteins nob-1 and ceh-20. Acts downstream of the Wnt signaling pathway, and of ceh-20 and nob-1. This is Transcriptional coregulator psa-3 from Caenorhabditis elegans.